We begin with the raw amino-acid sequence, 92 residues long: Small ribosomal subunit protein bS18 (92 aa).

It belongs to the bacterial ribosomal protein bS18 family. Part of the 30S ribosomal subunit. Forms a tight heterodimer with protein bS6.

Functionally, binds as a heterodimer with protein bS6 to the central domain of the 16S rRNA, where it helps stabilize the platform of the 30S subunit. This is Small ribosomal subunit protein bS18 from Chlorobium chlorochromatii (strain CaD3).